Here is a 303-residue protein sequence, read N- to C-terminus: tRNA pseudouridine synthase B (303 aa).

Residue Asp-47 is the Nucleophile of the active site.

This sequence belongs to the pseudouridine synthase TruB family. Type 1 subfamily.

The catalysed reaction is uridine(55) in tRNA = pseudouridine(55) in tRNA. Its function is as follows. Responsible for synthesis of pseudouridine from uracil-55 in the psi GC loop of transfer RNAs. This Ruegeria pomeroyi (strain ATCC 700808 / DSM 15171 / DSS-3) (Silicibacter pomeroyi) protein is tRNA pseudouridine synthase B.